A 395-amino-acid chain; its full sequence is Synaptotagmin-8 (395 aa).

The Extracellular portion of the chain corresponds to 1-44 (MQADRSMKMGHALNPFSTSAPLDATAGPSLIPDLITRIPWPRWT). The chain crosses the membrane as a helical; Signal-anchor for type III membrane protein span at residues 45–65 (LFIAILAAGVLLVSCLLCVIC). At 66–395 (CYCHRHRHRK…PRLPLLRPRS (330 aa)) the chain is on the cytoplasmic side. C2 domains follow at residues 113-229 (QWGR…ESWY) and 241-370 (QMGE…AQWH).

The protein belongs to the synaptotagmin family. In terms of assembly, homodimer or homooligomer. Homodimerization and homooligomerization do not depend on Ca(2+). Interacts with SYNCRIP isoform 2 C-terminus. Binds inositol 1,3,4,5-tetrakisphosphate (IP4). Binds to AP2 in a Ca(2+)-independent manner. Interacts with STX1A, STX1B and STX2; the interaction is Ca(2+)-dependent. Ubiquitous. Detected in testis and brain. Expressed in primary neurons, neuroendocrine and endocrine cells.

Its subcellular location is the cytoplasm. The protein localises to the cell membrane. The protein resides in the cytoplasmic vesicle. It localises to the secretory vesicle. It is found in the acrosome. Involved in the trafficking and exocytosis of secretory vesicles in non-neuronal tissues. Mediates Ca(2+)-regulation of exocytosis acrosomal reaction in sperm. May mediate Ca(2+)-regulation of exocytosis in insulin secreted cells. The sequence is that of Synaptotagmin-8 (Syt8) from Mus musculus (Mouse).